Here is a 489-residue protein sequence, read N- to C-terminus: MDDDLMLALRLQEEWNLQEAERDHAQESLSLVDASWELVDPTPDLQALFVQFNDQFFWGQLEAVEVKWSVRMTLCAGICSYEGKGGMCSIRLSEPLLKLRPRKDLVETLLHEMIHAYLFVTNNDKDREGHGPEFCKHMHRINSLTGANITVYHTFHDEVDEYRRHWWRCNGPCQHRPPYYGYVKRATNREPSAHDYWWAEHQKTCGGTYIKIKEPENYSKKGKGKAKLGKEPVLAAENKDKPNRGEAQLVIPFSGKGYVLGETSNLPSPGKLITSHAINKTQDLLNQNHSANAVRPNSKIKVKFEQNGSSKNSHLVSPAVSNSHQNVLSNYFPRVSFANQKAFRGVNGSPRISVTVGNIPKNSVSSSSQRRVSSSKISLRNSSKVTESASVMPSQDVSGSEDTFPNKRPRLEDKTVFDNFFIKKEQIKSSGNDPKYSTTTAQNSSSSSSQSKMVNCPVCQNEVLESQINEHLDWCLEGDSIKVKSEESL.

Met1 is modified (N-acetylmethionine). The region spanning 45-212 is the SprT-like domain; sequence LQALFVQFND…KTCGGTYIKI (168 aa). His111 is a Zn(2+) binding site. Glu112 is a catalytic residue. The Zn(2+) site is built by His115 and His130. Residue Lys230 is modified to N6-acetyllysine. An SHP-box motif is present at residues 253–261; the sequence is FSGKGYVLG. At Ser268 the chain carries Phosphoserine. A Glycyl lysine isopeptide (Lys-Gly) (interchain with G-Cter in SUMO2) cross-link involves residue Lys303. The short motif at 325–332 is the PIP-box element; the sequence is QNVLSNYF. Lys341 participates in a covalent cross-link: Glycyl lysine isopeptide (Lys-Gly) (interchain with G-Cter in SUMO2); alternate. Lys341 participates in a covalent cross-link: Glycyl lysine isopeptide (Lys-Gly) (interchain with G-Cter in ubiquitin); alternate. Residues 357–409 are disordered; that stretch reads GNIPKNSVSSSSQRRVSSSKISLRNSSKVTESASVMPSQDVSGSEDTFPNKRP. Lys361 is covalently cross-linked (Glycyl lysine isopeptide (Lys-Gly) (interchain with G-Cter in SUMO2)). Over residues 363 to 383 the composition is skewed to low complexity; it reads SVSSSSQRRVSSSKISLRNSS. Residues Ser373 and Ser374 each carry the phosphoserine; by CHEK1 modification. A Glycyl lysine isopeptide (Lys-Gly) (interchain with G-Cter in SUMO2); alternate cross-link involves residue Lys376. A Glycyl lysine isopeptide (Lys-Gly) (interchain with G-Cter in ubiquitin); alternate cross-link involves residue Lys376. Ser383 bears the Phosphoserine; by CHEK1 mark. Residues 384–403 are compositionally biased toward polar residues; sequence KVTESASVMPSQDVSGSEDT. A Nuclear localization signal motif is present at residues 402–413; that stretch reads DTFPNKRPRLED. Lys414 participates in a covalent cross-link: Glycyl lysine isopeptide (Lys-Gly) (interchain with G-Cter in ubiquitin). Residues Lys423 and Lys424 each participate in a glycyl lysine isopeptide (Lys-Gly) (interchain with G-Cter in SUMO2) cross-link. Residues 428 to 453 form a disordered region; that stretch reads KSSGNDPKYSTTTAQNSSSSSSQSKM. Residue Lys435 forms a Glycyl lysine isopeptide (Lys-Gly) (interchain with G-Cter in ubiquitin) linkage. A compositionally biased stretch (low complexity) spans 437-451; that stretch reads STTTAQNSSSSSSQS. The UBZ4-type zinc finger occupies 453-480; it reads MVNCPVCQNEVLESQINEHLDWCLEGDS. Positions 456, 459, 471, and 475 each coordinate Zn(2+). Lys484 is covalently cross-linked (Glycyl lysine isopeptide (Lys-Gly) (interchain with G-Cter in SUMO2)).

It belongs to the Spartan family. Homodimer. Interacts (VIA PIP-box) with PCNA (when ubiquitinated). Interacts (via its SHP-box) with VCP/p97. Interacts with RAD18. Interacts with KCTD13 and POLD3. Requires Zn(2+) as cofactor. In terms of processing, autocatalytically cleaved in response to double-stranded DNA-binding: autocatalytic cleavage takes place in trans and leads to inactivation. Post-translationally, monoubiquitinated; monoubiquitination promotes exclusion from chromatin. Deubiquitinated by VCPIP1: deubiquitination is required for subsequent acetylation and recruitment to chromatin and DNA damage sites. Acetylated following deubiquitination by VCPIP1, leading to recruitment to chromatin and DNA damage sites. In terms of processing, phosphorylation by CHEK1 promotes recruitment to chromatin.

Its subcellular location is the nucleus. The protein localises to the chromosome. DNA-binding activates the protease activity: single-stranded DNA-binding specifically activates ability to cleave covalent DNA-protein cross-links (DPCs). In contrast, double-stranded DNA-binding specifically activates autocatalytic cleavage, and subsequent inactivation. In terms of biological role, DNA-dependent metalloendopeptidase that mediates the proteolytic cleavage of covalent DNA-protein cross-links (DPCs) during DNA synthesis, thereby playing a key role in maintaining genomic integrity. DPCs are highly toxic DNA lesions that interfere with essential chromatin transactions, such as replication and transcription, and which are induced by reactive agents, such as UV light or formaldehyde. Associates with the DNA replication machinery and specifically removes DPCs during DNA synthesis. Catalyzes proteolytic cleavage of the HMCES DNA-protein cross-link following unfolding by the BRIP1/FANCJ helicase. Acts as a pleiotropic protease for DNA-binding proteins cross-linked with DNA, such as TOP1, TOP2A, histones H3 and H4. Mediates degradation of DPCs that are not ubiquitinated, while it is not able to degrade ubiquitinated DPCs. SPRTN activation requires polymerase collision with DPCs followed by helicase bypass of DPCs. Involved in recruitment of VCP/p97 to sites of DNA damage. Also acts as an activator of CHEK1 during normal DNA replication by mediating proteolytic cleavage of CHEK1, thereby promoting CHEK1 removal from chromatin and subsequent activation. Does not activate CHEK1 in response to DNA damage. May also act as a 'reader' of ubiquitinated PCNA: recruited to sites of UV damage and interacts with ubiquitinated PCNA and RAD18, the E3 ubiquitin ligase that monoubiquitinates PCNA. Facilitates chromatin association of RAD18 and is required for efficient PCNA monoubiquitination, promoting a feed-forward loop to enhance PCNA ubiquitination and translesion DNA synthesis. The polypeptide is DNA-dependent metalloprotease SPRTN (Homo sapiens (Human)).